An 84-amino-acid polypeptide reads, in one-letter code: ICP35 (84 aa).

In Crustacea (WSSV), this protein is ICP35.